Here is a 514-residue protein sequence, read N- to C-terminus: tRNA-2-methylthio-N(6)-dimethylallyladenosine synthase (514 aa).

A disordered region spans residues 1 to 21 (MNEEQRKASSVDVLAERDKKA). Residues 68-186 (RTFLIKTYGC…LPEILEEAYL (119 aa)) form the MTTase N-terminal domain. [4Fe-4S] cluster is bound by residues Cys77, Cys113, Cys147, Cys223, Cys227, and Cys230. The 232-residue stretch at 209-440 (REGNIKAWVN…KKVGHYSQIA (232 aa)) folds into the Radical SAM core domain. One can recognise a TRAM domain in the interval 442 to 505 (SKYEGQTVTV…QYSLNGSFIK (64 aa)).

Belongs to the methylthiotransferase family. MiaB subfamily. In terms of assembly, monomer. [4Fe-4S] cluster serves as cofactor.

The protein resides in the cytoplasm. It carries out the reaction N(6)-dimethylallyladenosine(37) in tRNA + (sulfur carrier)-SH + AH2 + 2 S-adenosyl-L-methionine = 2-methylsulfanyl-N(6)-dimethylallyladenosine(37) in tRNA + (sulfur carrier)-H + 5'-deoxyadenosine + L-methionine + A + S-adenosyl-L-homocysteine + 2 H(+). In terms of biological role, catalyzes the methylthiolation of N6-(dimethylallyl)adenosine (i(6)A), leading to the formation of 2-methylthio-N6-(dimethylallyl)adenosine (ms(2)i(6)A) at position 37 in tRNAs that read codons beginning with uridine. This Staphylococcus aureus (strain USA300 / TCH1516) protein is tRNA-2-methylthio-N(6)-dimethylallyladenosine synthase.